Reading from the N-terminus, the 308-residue chain is D-alanine--D-alanine ligase (308 aa).

In terms of domain architecture, ATP-grasp spans 100–295; the sequence is KEVFVRNGLP…FDGLIGRLIE (196 aa). 127 to 180 is a binding site for ATP; it reads PFAFPAFIKSNNGGSSLALHRVSCPGELARALDELFTRGGEAIIEPAVEGVEVT. Residues Asp-249, Glu-262, and Asn-264 each contribute to the Mg(2+) site.

Belongs to the D-alanine--D-alanine ligase family. Mg(2+) serves as cofactor. It depends on Mn(2+) as a cofactor.

The protein resides in the cytoplasm. It carries out the reaction 2 D-alanine + ATP = D-alanyl-D-alanine + ADP + phosphate + H(+). Its pathway is cell wall biogenesis; peptidoglycan biosynthesis. In terms of biological role, cell wall formation. In Oleidesulfovibrio alaskensis (strain ATCC BAA-1058 / DSM 17464 / G20) (Desulfovibrio alaskensis), this protein is D-alanine--D-alanine ligase.